Reading from the N-terminus, the 218-residue chain is Thiopurine S-methyltransferase (218 aa).

Trp11, Leu46, Glu67, and Arg122 together coordinate S-adenosyl-L-methionine.

Belongs to the class I-like SAM-binding methyltransferase superfamily. TPMT family.

The protein localises to the cytoplasm. The enzyme catalyses S-adenosyl-L-methionine + a thiopurine = S-adenosyl-L-homocysteine + a thiopurine S-methylether.. This Vibrio cholerae serotype O1 (strain ATCC 39315 / El Tor Inaba N16961) protein is Thiopurine S-methyltransferase.